The following is a 232-amino-acid chain: Ubiquinone biosynthesis O-methyltransferase (232 aa).

S-adenosyl-L-methionine contacts are provided by Arg36, Gly55, Asp76, and Met120.

This sequence belongs to the methyltransferase superfamily. UbiG/COQ3 family.

It carries out the reaction a 3-demethylubiquinol + S-adenosyl-L-methionine = a ubiquinol + S-adenosyl-L-homocysteine + H(+). The catalysed reaction is a 3-(all-trans-polyprenyl)benzene-1,2-diol + S-adenosyl-L-methionine = a 2-methoxy-6-(all-trans-polyprenyl)phenol + S-adenosyl-L-homocysteine + H(+). It participates in cofactor biosynthesis; ubiquinone biosynthesis. Functionally, O-methyltransferase that catalyzes the 2 O-methylation steps in the ubiquinone biosynthetic pathway. In Burkholderia orbicola (strain MC0-3), this protein is Ubiquinone biosynthesis O-methyltransferase.